We begin with the raw amino-acid sequence, 372 residues long: Carbamoyl phosphate synthase small chain (372 aa).

Residues 1-186 (MTYCKRGTEG…IHQNNSPDII (186 aa)) are CPSase. S52, G233, and G235 together coordinate L-glutamine. In terms of domain architecture, Glutamine amidotransferase type-1 spans 185-372 (IIVLVDCGIK…KKMVIKDEGN (188 aa)). The active-site Nucleophile is the C261. L-glutamine is bound by residues L262, Q265, N303, G305, and Y306. Active-site residues include H345 and E347.

The protein belongs to the CarA family. As to quaternary structure, composed of two chains; the small (or glutamine) chain promotes the hydrolysis of glutamine to ammonia, which is used by the large (or ammonia) chain to synthesize carbamoyl phosphate. Tetramer of heterodimers (alpha,beta)4.

It catalyses the reaction hydrogencarbonate + L-glutamine + 2 ATP + H2O = carbamoyl phosphate + L-glutamate + 2 ADP + phosphate + 2 H(+). The enzyme catalyses L-glutamine + H2O = L-glutamate + NH4(+). Its pathway is amino-acid biosynthesis; L-arginine biosynthesis; carbamoyl phosphate from bicarbonate: step 1/1. It functions in the pathway pyrimidine metabolism; UMP biosynthesis via de novo pathway; (S)-dihydroorotate from bicarbonate: step 1/3. Functionally, small subunit of the glutamine-dependent carbamoyl phosphate synthetase (CPSase). CPSase catalyzes the formation of carbamoyl phosphate from the ammonia moiety of glutamine, carbonate, and phosphate donated by ATP, constituting the first step of 2 biosynthetic pathways, one leading to arginine and/or urea and the other to pyrimidine nucleotides. The small subunit (glutamine amidotransferase) binds and cleaves glutamine to supply the large subunit with the substrate ammonia. The sequence is that of Carbamoyl phosphate synthase small chain from Metallosphaera sedula (strain ATCC 51363 / DSM 5348 / JCM 9185 / NBRC 15509 / TH2).